Consider the following 451-residue polypeptide: MDYKTKKNSNATVDIKLTFEASDLEKAFDKTYAEKQKNIKIPGFRPGKAPLNMVKRHLGDTVASDAINTLIVDGMASILTKLEHPMVRFPKFEIQDYQPGKNLIATAVYETNPEITLGKYKKIKVKLPEVSVSDSDIFDEIENIRKQLARKQLKEDGQTAASGDIIDMEYTVCEKGQEPKNASNTSNDYHLGHENNLKGFDENLYGLGVGDRKEFSHTFPEDYLQNEVAGKTFEYSVTIKALYVNILPTVDDDLAAEFDGSDSLNTLKDKIRKNLKERFEEGIRNKKLEEIFKEIIDDSKYIFPDSYVKEESEHVFHNMIHEFKLPHITMEKYAKMIKKDLKEVQESFRNLAENRLKHFFTRQKIAEIENVTYTETDFDADLEKLASSYQIPLSDLKEELEKGKLMDQYRENFFAKKVDHTLFDLVEKKYTNKLSIGQVKDYLNQKEEQKV.

Residues 163-248 (GDIIDMEYTV…IKALYVNILP (86 aa)) form the PPIase FKBP-type domain.

The protein belongs to the FKBP-type PPIase family. Tig subfamily.

The protein resides in the cytoplasm. It carries out the reaction [protein]-peptidylproline (omega=180) = [protein]-peptidylproline (omega=0). Functionally, involved in protein export. Acts as a chaperone by maintaining the newly synthesized protein in an open conformation. Functions as a peptidyl-prolyl cis-trans isomerase. The protein is Trigger factor of Leptospira borgpetersenii serovar Hardjo-bovis (strain JB197).